A 363-amino-acid polypeptide reads, in one-letter code: MRTVLIAGAFSLVVSLFGTPLYIRWLVRRGYGQFVRDDGPTSHHTKRGTPTMGGVVIILAALLAYGAAHLFTGALPTVSGLLVLLLMTGLGVVGFLDDFLKISNQRSLGLTAKAKLAGQGLVGIVFAVLALQFPAAGKDGTTPASTHISVLRDTPLDLAVFGAVGGTVLFVVWALIITSAVSNGVNLTDGLDGLATGATTMVLAAYVLICTFQSNQSCYSLTEVEARCYEVRDPRDLAVVAAAVMGACFGFLWWNASPAKIFMGDTGSLALGGALAGLAILSRTQILLVLLGGLFVLITLSVILQVGSFKLTGKRIFRMAPLQHHFELAGWGEVTIVIRFWIIAGLFVFLGLGVFYAEWVTGA.

10 helical membrane-spanning segments follow: residues 3 to 23, 55 to 75, 76 to 96, 116 to 136, 158 to 178, 190 to 210, 237 to 257, 261 to 281, 286 to 306, and 340 to 360; these read TVLIAGAFSLVVSLFGTPLYI, VVIILAALLAYGAAHLFTGAL, PTVSGLLVLLLMTGLGVVGFL, LAGQGLVGIVFAVLALQFPAA, LAVFGAVGGTVLFVVWALIIT, GLDGLATGATTMVLAAYVLIC, LAVVAAAVMGACFGFLWWNAS, IFMGDTGSLALGGALAGLAIL, ILLVLLGGLFVLITLSVILQV, and FWIIAGLFVFLGLGVFYAEWV.

Belongs to the glycosyltransferase 4 family. MraY subfamily. It depends on Mg(2+) as a cofactor.

It localises to the cell membrane. The catalysed reaction is UDP-N-acetyl-alpha-D-muramoyl-L-alanyl-gamma-D-glutamyl-meso-2,6-diaminopimeloyl-D-alanyl-D-alanine + di-trans,octa-cis-undecaprenyl phosphate = di-trans,octa-cis-undecaprenyl diphospho-N-acetyl-alpha-D-muramoyl-L-alanyl-D-glutamyl-meso-2,6-diaminopimeloyl-D-alanyl-D-alanine + UMP. Its pathway is cell wall biogenesis; peptidoglycan biosynthesis. Catalyzes the initial step of the lipid cycle reactions in the biosynthesis of the cell wall peptidoglycan: transfers peptidoglycan precursor phospho-MurNAc-pentapeptide from UDP-MurNAc-pentapeptide onto the lipid carrier undecaprenyl phosphate, yielding undecaprenyl-pyrophosphoryl-MurNAc-pentapeptide, known as lipid I. The chain is Phospho-N-acetylmuramoyl-pentapeptide-transferase from Kineococcus radiotolerans (strain ATCC BAA-149 / DSM 14245 / SRS30216).